The chain runs to 32 residues: GLWSKIKEAAKAAGKAALNAVTGLVNQGDQPS.

In terms of tissue distribution, expressed by the skin glands.

It is found in the secreted. In terms of biological role, antimicrobial peptide active against the Gram-negative bacterium E.coli (MIC=8 uM) but inactive against the Gram-positive bacterium S.aureus. Also inhibits growth of zoospores of the chytrid fungus B.dendrobatidis at high concentrations (above 25 uM). Shows anticancer activities since it is cytolytic against HepG2 human hepatoma-derived cells (LC(50)=45 uM). Is only weakly hemolytic on human erythrocytes. This Agalychnis lemur (Lemur leaf frog) protein is Dermaseptin-L1.